Here is a 166-residue protein sequence, read N- to C-terminus: Urease accessory protein UreE (166 aa).

Positions 132–156 (FQPEHGAYGGGHHHSRHGDEDFNYP) are disordered.

It belongs to the UreE family.

The protein localises to the cytoplasm. Functionally, involved in urease metallocenter assembly. Binds nickel. Probably functions as a nickel donor during metallocenter assembly. In Pseudomonas fluorescens (strain ATCC BAA-477 / NRRL B-23932 / Pf-5), this protein is Urease accessory protein UreE.